Reading from the N-terminus, the 233-residue chain is Rano class II histocompatibility antigen, A beta chain (233 aa).

Positions 1 to 80 (DFVYQFKGLC…DTVCRYNYEE (80 aa)) are beta-1. Residues 1–194 (DFVYQFKGLC…RAQSESAQSK (194 aa)) are Extracellular-facing. A glycan (N-linked (GlcNAc...) asparagine) is linked at Asn-14. Residues 81 to 184 (TEVPTSLRRL…SLESPVTVEW (104 aa)) are beta-2. Residues 93–181 (PNVAISLSRT…DHASLESPVT (89 aa)) enclose the Ig-like C1-type domain. A connecting peptide region spans residues 185–194 (RAQSESAQSK). A helical transmembrane segment spans residues 195-215 (MLSGIGGLVLGVIFLGLGLFI). At 216-233 (RHKRQKGPQGPPPAGLLQ) the chain is on the cytoplasmic side.

This sequence belongs to the MHC class II family.

Its subcellular location is the membrane. Its function is as follows. Involved in the presentation of foreign antigens to the immune system. The polypeptide is Rano class II histocompatibility antigen, A beta chain (RT1-B) (Rattus norvegicus (Rat)).